The following is a 137-amino-acid chain: MLQPKRTKFRKQQKGRNYGLASRGNAVSFGEYGLKAVTRGPITARQIEAGRRAINRHVKRGGKVWIRVFPDKPITAKPLEVRQGKGKGNVDHWAFPVQPGRVLYEIEGVSEELAREAFRRAAAKLPVRTTFVQRTVL.

This sequence belongs to the universal ribosomal protein uL16 family. In terms of assembly, part of the 50S ribosomal subunit.

Functionally, binds 23S rRNA and is also seen to make contacts with the A and possibly P site tRNAs. This chain is Large ribosomal subunit protein uL16, found in Alkalilimnicola ehrlichii (strain ATCC BAA-1101 / DSM 17681 / MLHE-1).